Consider the following 438-residue polypeptide: MNIKSAEFVDRVKIFVKAGDGGNGCVSFRREKYVPKGGPDGGDGGDGGFVFLRANPSLSTLIEFVNKRKFFAENGKHGMGKKMKGRNGRDLYIDVPVGTVVKDASTGQIIADLDEPGKVVCVARGGRGGRGNAHFSTPTRQAPLIAEKGEKGEARWLELELKILADVGLVGYPNVGKSSLIARISNARPKIANYPFTTLVPNLGVVKYGDFSFVVADIPGLIEGASEGVGLGNVFLRHVERCFVIVHMLDVSGFEREDPARDYFIIREEMKKYSPFLLEKPEIVVANKIDLLEREKLPQRIKEIESSIGKEVIPISAVTGEGVDLLLDRVASIVRKERIEREERKEKKDHPMEKPAPVWRKLPERFEVEVVKEEDGQWVVEGEGLRVWMERFDLNQRDARLLILQILEKNGLEEKLKEAGVKEGDVVRIGNFEFEYRE.

Residues 6–164 (AEFVDRVKIF…RWLELELKIL (159 aa)) form the Obg domain. One can recognise an OBG-type G domain in the interval 165-335 (ADVGLVGYPN…LLDRVASIVR (171 aa)). Residues 171 to 178 (GYPNVGKS), 196 to 200 (FTTLV), 217 to 220 (DIPG), 287 to 290 (NKID), and 316 to 318 (SAV) each bind GTP. Positions 178 and 198 each coordinate Mg(2+). The 81-residue stretch at 358-438 (VWRKLPERFE…IGNFEFEYRE (81 aa)) folds into the OCT domain.

The protein belongs to the TRAFAC class OBG-HflX-like GTPase superfamily. OBG GTPase family. As to quaternary structure, monomer. Mg(2+) serves as cofactor.

The protein resides in the cytoplasm. In terms of biological role, an essential GTPase which binds GTP, GDP and possibly (p)ppGpp with moderate affinity, with high nucleotide exchange rates and a fairly low GTP hydrolysis rate. Plays a role in control of the cell cycle, stress response, ribosome biogenesis and in those bacteria that undergo differentiation, in morphogenesis control. The chain is GTPase Obg from Thermotoga neapolitana (strain ATCC 49049 / DSM 4359 / NBRC 107923 / NS-E).